Consider the following 1146-residue polypeptide: Activator of SKN7 protein 10 (1146 aa).

The span at methionine 1 to proline 15 shows a compositional bias: polar residues. 2 disordered regions span residues methionine 1 to isoleucine 32 and isoleucine 171 to leucine 194. Position 344 is a phosphoserine (serine 344). Residues cysteine 482–threonine 606 form the PH domain. Positions asparagine 553 to alanine 575 are disordered. A compositionally biased stretch (low complexity) spans asparagine 564–alanine 575. Serine 793 bears the Phosphoserine mark. Threonine 808 carries the phosphothreonine modification. Disordered stretches follow at residues methionine 835 to methionine 854 and proline 909 to arginine 982. Low complexity predominate over residues serine 912 to glycine 924. Over residues tyrosine 939 to cysteine 950 the composition is skewed to polar residues. Serine 944 carries the phosphoserine modification. Residues glutamine 958–leucine 968 show a composition bias toward low complexity. Serine 969 bears the Phosphoserine mark. The span at serine 969–arginine 982 shows a compositional bias: polar residues. Phosphothreonine is present on threonine 1017. Serine 1070, serine 1095, and serine 1098 each carry phosphoserine. The interval glycine 1124–serine 1146 is disordered. Residues serine 1132–serine 1146 show a composition bias toward polar residues.

This sequence belongs to the RGC1 family. In terms of assembly, component of the RNA polymerase II holoenzyme. Interacts with RPO21 and SSN8. Phosphorylated in response to various stresses. stress-induced phosphorylation is partially dependent on HOG1.

Its subcellular location is the cytoplasm. Functionally, positive regulator of FPS1 glycerol channel required for the glycerol efflux. As a component of the RNA polymerase II holoenzyme, is required for SSN8 destruction in response to oxidative stress but not heat shock. Required for cell survival in response to heat shock independent of SSN8. In Saccharomyces cerevisiae (strain ATCC 204508 / S288c) (Baker's yeast), this protein is Activator of SKN7 protein 10 (ASK10).